The primary structure comprises 470 residues: Ribulose bisphosphate carboxylase large chain (470 aa).

Substrate contacts are provided by N118 and T168. The active-site Proton acceptor is K170. K172 contributes to the substrate binding site. Mg(2+)-binding residues include K196, D198, and E199. K196 is subject to N6-carboxylysine. The active-site Proton acceptor is H289. 3 residues coordinate substrate: R290, H322, and S374. The Interacts with RbcX2 motif lies at 459 to 465 (EIKFEFD).

Belongs to the RuBisCO large chain family. Type I subfamily. Heterohexadecamer of 8 large chains and 8 small chains; disulfide-linked. The disulfide link is formed within the large subunit homodimers. Mg(2+) serves as cofactor. Post-translationally, the disulfide bond which can form in the large chain dimeric partners within the hexadecamer appears to be associated with oxidative stress and protein turnover.

Its subcellular location is the carboxysome. The enzyme catalyses 2 (2R)-3-phosphoglycerate + 2 H(+) = D-ribulose 1,5-bisphosphate + CO2 + H2O. It carries out the reaction D-ribulose 1,5-bisphosphate + O2 = 2-phosphoglycolate + (2R)-3-phosphoglycerate + 2 H(+). Functionally, ruBisCO catalyzes two reactions: the carboxylation of D-ribulose 1,5-bisphosphate, the primary event in carbon dioxide fixation, as well as the oxidative fragmentation of the pentose substrate in the photorespiration process. Both reactions occur simultaneously and in competition at the same active site. The polypeptide is Ribulose bisphosphate carboxylase large chain (Picosynechococcus sp. (strain ATCC 27264 / PCC 7002 / PR-6) (Agmenellum quadruplicatum)).